Reading from the N-terminus, the 286-residue chain is ATP synthase gamma chain (286 aa).

It belongs to the ATPase gamma chain family. In terms of assembly, F-type ATPases have 2 components, CF(1) - the catalytic core - and CF(0) - the membrane proton channel. CF(1) has five subunits: alpha(3), beta(3), gamma(1), delta(1), epsilon(1). CF(0) has three main subunits: a, b and c.

The protein resides in the cell membrane. Produces ATP from ADP in the presence of a proton gradient across the membrane. The gamma chain is believed to be important in regulating ATPase activity and the flow of protons through the CF(0) complex. The chain is ATP synthase gamma chain from Mycoplasma mobile (strain ATCC 43663 / 163K / NCTC 11711) (Mesomycoplasma mobile).